Consider the following 404-residue polypeptide: LL-diaminopimelate aminotransferase (404 aa).

Residues Tyr-15 and Gly-42 each contribute to the substrate site. Pyridoxal 5'-phosphate-binding positions include Tyr-72, 108 to 109, Tyr-132, Asn-188, Tyr-219, and 247 to 249; these read AK and SFS. Substrate-binding residues include Lys-109, Tyr-132, and Asn-188. An N6-(pyridoxal phosphate)lysine modification is found at Lys-250. 2 residues coordinate pyridoxal 5'-phosphate: Arg-258 and Asn-288. 2 residues coordinate substrate: Asn-288 and Arg-384.

Belongs to the class-I pyridoxal-phosphate-dependent aminotransferase family. LL-diaminopimelate aminotransferase subfamily. As to quaternary structure, homodimer. The cofactor is pyridoxal 5'-phosphate.

It catalyses the reaction (2S,6S)-2,6-diaminopimelate + 2-oxoglutarate = (S)-2,3,4,5-tetrahydrodipicolinate + L-glutamate + H2O + H(+). It participates in amino-acid biosynthesis; L-lysine biosynthesis via DAP pathway; LL-2,6-diaminopimelate from (S)-tetrahydrodipicolinate (aminotransferase route): step 1/1. Functionally, involved in the synthesis of meso-diaminopimelate (m-DAP or DL-DAP), required for both lysine and peptidoglycan biosynthesis. Catalyzes the direct conversion of tetrahydrodipicolinate to LL-diaminopimelate. The polypeptide is LL-diaminopimelate aminotransferase (Lachnoclostridium phytofermentans (strain ATCC 700394 / DSM 18823 / ISDg) (Clostridium phytofermentans)).